We begin with the raw amino-acid sequence, 210 residues long: Large ribosomal subunit protein uL3 (210 aa).

The protein belongs to the universal ribosomal protein uL3 family. Part of the 50S ribosomal subunit. Forms a cluster with proteins L14 and L19.

Its function is as follows. One of the primary rRNA binding proteins, it binds directly near the 3'-end of the 23S rRNA, where it nucleates assembly of the 50S subunit. The chain is Large ribosomal subunit protein uL3 from Syntrophotalea carbinolica (strain DSM 2380 / NBRC 103641 / GraBd1) (Pelobacter carbinolicus).